Consider the following 431-residue polypeptide: Peptidase B (431 aa).

Mn(2+) is bound by residues K196 and D201. Residue K208 is part of the active site. Mn(2+) is bound by residues D219, D278, and E280. R282 is a catalytic residue.

It belongs to the peptidase M17 family. As to quaternary structure, homohexamer. It depends on Mn(2+) as a cofactor.

The protein resides in the cytoplasm. The catalysed reaction is Release of an N-terminal amino acid, Xaa, from a peptide or arylamide. Xaa is preferably Glu or Asp but may be other amino acids, including Leu, Met, His, Cys and Gln.. Functionally, probably plays an important role in intracellular peptide degradation. This is Peptidase B from Photorhabdus laumondii subsp. laumondii (strain DSM 15139 / CIP 105565 / TT01) (Photorhabdus luminescens subsp. laumondii).